Consider the following 182-residue polypeptide: Adenylate kinase (182 aa).

12–17 serves as a coordination point for ATP; the sequence is GAGKGT. The tract at residues 32–61 is NMP; sequence STGDLLREEVSGGTDLGKKAELIMNKGELV. AMP is bound by residues threonine 33, arginine 38, 59–61, 85–88, and glutamine 92; these read ELV and GFPR. An LID region spans residues 126-132; the sequence is GRGRKDD. An ATP-binding site is contributed by arginine 127. Residues arginine 129 and arginine 140 each coordinate AMP. Glycine 168 contacts ATP.

Belongs to the adenylate kinase family. In terms of assembly, monomer.

It is found in the cytoplasm. It catalyses the reaction AMP + ATP = 2 ADP. It functions in the pathway purine metabolism; AMP biosynthesis via salvage pathway; AMP from ADP: step 1/1. Its function is as follows. Catalyzes the reversible transfer of the terminal phosphate group between ATP and AMP. Plays an important role in cellular energy homeostasis and in adenine nucleotide metabolism. The sequence is that of Adenylate kinase from Prochlorococcus marinus (strain SARG / CCMP1375 / SS120).